Consider the following 449-residue polypeptide: Glutamyl-tRNA reductase (449 aa).

Substrate-binding positions include 49–52 (TCNR), Ser109, 114–116 (ETQ), and Gln120. The Nucleophile role is filled by Cys50. 189-194 (GAGKMS) provides a ligand contact to NADP(+). The disordered stretch occupies residues 427 to 449 (NFTHPREEMEESDEKRSYCGESR).

It belongs to the glutamyl-tRNA reductase family. As to quaternary structure, homodimer.

It carries out the reaction (S)-4-amino-5-oxopentanoate + tRNA(Glu) + NADP(+) = L-glutamyl-tRNA(Glu) + NADPH + H(+). It functions in the pathway porphyrin-containing compound metabolism; protoporphyrin-IX biosynthesis; 5-aminolevulinate from L-glutamyl-tRNA(Glu): step 1/2. Its function is as follows. Catalyzes the NADPH-dependent reduction of glutamyl-tRNA(Glu) to glutamate 1-semialdehyde (GSA). This Carboxydothermus hydrogenoformans (strain ATCC BAA-161 / DSM 6008 / Z-2901) protein is Glutamyl-tRNA reductase.